A 331-amino-acid polypeptide reads, in one-letter code: Tagatose 1,6-diphosphate aldolase 2 (331 aa).

It belongs to the aldolase LacD family.

It carries out the reaction D-tagatofuranose 1,6-bisphosphate = D-glyceraldehyde 3-phosphate + dihydroxyacetone phosphate. The protein operates within carbohydrate metabolism; D-tagatose 6-phosphate degradation; D-glyceraldehyde 3-phosphate and glycerone phosphate from D-tagatose 6-phosphate: step 2/2. This is Tagatose 1,6-diphosphate aldolase 2 (lacD2) from Enterococcus faecalis (strain ATCC 700802 / V583).